The following is a 138-amino-acid chain: QHSKHHAAYVAGVNSAVAKLEEAREKGDHAAIFLNEKNLAFHLGGHVNHSIWWKNLSPNGGDKPTGDLAAAIDDQFGSFDKFQAQFTAAANGLQGSGWAVLGYDSLGQKLLTFQLYDQQANVPLGIIPLLQVDMWEHA.

Positions 1, 49, 133, and 137 each coordinate Mn(2+).

This sequence belongs to the iron/manganese superoxide dismutase family. The cofactor is Mn(2+).

It catalyses the reaction 2 superoxide + 2 H(+) = H2O2 + O2. Its function is as follows. Destroys superoxide anion radicals which are normally produced within the cells and which are toxic to biological systems. The protein is Superoxide dismutase [Mn] (sodA) of Mycobacteroides chelonae (Mycobacterium chelonae).